Reading from the N-terminus, the 777-residue chain is Hepatocyte growth factor-regulated tyrosine kinase substrate (777 aa).

Residues 15-143 enclose the VHS domain; it reads ATSQLLLETD…IMKVEGHVFP (129 aa). The FYVE-type zinc finger occupies 160–220; it reads WVDAEECHRC…VCEPCYEQLN (61 aa). Zn(2+) contacts are provided by Cys-166, Cys-169, Cys-182, Cys-185, Cys-190, and Cys-193. Lys-207 is modified (N6-acetyllysine). Zn(2+) contacts are provided by Cys-212 and Cys-215. Tyr-216 bears the Phosphotyrosine mark. Positions 223-319 are disordered; it reads AEGKATSTTE…SPVNSSAPLA (97 aa). Positions 225-543 are interaction with SNX1; it reads GKATSTTELP…QRLQEQEKER (319 aa). The UIM domain maps to 258–277; it reads QEEEELQLALALSQSEAEEK. Residues 290–311 show a composition bias toward low complexity; that stretch reads PKAEPMPSASSAPPASSLYSSP. Phosphotyrosine occurs at positions 308, 329, and 334. A disordered region spans residues 338–407; it reads KQEEARKSPT…NGESEESHEQ (70 aa). The segment at 445–543 is interaction with SNAP25 and TRAK2; that stretch reads SINGMHPQLL…QRLQEQEKER (99 aa). Positions 454 to 572 are interaction with STAM; sequence LELLNQLDER…FPLPYAQLQA (119 aa). The segment at 480 to 777 is interaction with NF2; sequence ARGALSALRE…GSEAQLISFD (298 aa). Lys-551 carries the post-translational modification N6-succinyllysine. A disordered region spans residues 718–777; sequence LPSQDASLPPQQPYIAGQQPMYQQMAPSGGPPQQQPPVAQQPQAQGPPAQGSEAQLISFD. Residues 753–768 are compositionally biased toward low complexity; it reads PPVAQQPQAQGPPAQG.

As to quaternary structure, component of the ESCRT-0 complex composed of STAM or STAM2 and HGS. Part of a complex at least composed of HSG, STAM2 (or probably STAM) and EPS15. Interacts with STAM. Interacts with STAM2. Interacts with EPS15; the interaction is direct, calcium-dependent and inhibited by SNAP25. Identified in a complex with STAM and LITAF. Found in a complex with STAM and E3 ligase ITCH and DTX3L. Interacts with E3 ligase DTX3L; the interaction brings together STAM and HSG, promotes their recruitment to early endosomes and decreases STAM and HGS ubiquitination by ITCH. Interacts with NF2; the interaction is direct. Interacts with ubiquitin; the interaction is direct. Interacts with VPS37C. Interacts with SMAD1, SMAD2 and SMAD3. Interacts with TSG101; the interaction mediates the association with the ESCRT-I complex. Interacts with SNAP25; the interaction is direct and decreases with addition of increasing concentrations of free calcium. Interacts with SNX1; the interaction is direct. Component of a 550 kDa membrane complex at least composed of HGS and SNX1 but excluding EGFR. Interacts with TRAK1. Interacts with TRAK2. Component of the CART complex, at least composed of ACTN4, HGS/HRS, MYO5B and TRIM3. Interacts (via UIM domain) with UBQLN1 (via ubiquitin-like domain). Interacts with ARRDC3. Identified in a complex containing at least ARRDC4, AVPR2 and HGS. Interacts with LAPTM4B; promotes HGS ubiquitination. Phosphorylated on Tyr-334. A minor site of phosphorylation on Tyr-329 is detected. Phosphorylation occurs in response to EGF, IL-2, GM-CSF and HGF. Post-translationally, ubiquitinated. Ubiquitinated by ITCH. In terms of tissue distribution, ubiquitous expression in adult and fetal tissues with higher expression in testis and peripheral blood leukocytes.

The protein localises to the cytoplasm. Its subcellular location is the early endosome membrane. It is found in the endosome. It localises to the multivesicular body membrane. Involved in intracellular signal transduction mediated by cytokines and growth factors. When associated with STAM, it suppresses DNA signaling upon stimulation by IL-2 and GM-CSF. Could be a direct effector of PI3-kinase in vesicular pathway via early endosomes and may regulate trafficking to early and late endosomes by recruiting clathrin. May concentrate ubiquitinated receptors within clathrin-coated regions. Involved in down-regulation of receptor tyrosine kinase via multivesicular body (MVBs) when complexed with STAM (ESCRT-0 complex). The ESCRT-0 complex binds ubiquitin and acts as a sorting machinery that recognizes ubiquitinated receptors and transfers them to further sequential lysosomal sorting/trafficking processes. May contribute to the efficient recruitment of SMADs to the activin receptor complex. Involved in receptor recycling via its association with the CART complex, a multiprotein complex required for efficient transferrin receptor recycling but not for EGFR degradation. This Homo sapiens (Human) protein is Hepatocyte growth factor-regulated tyrosine kinase substrate (HGS).